The following is a 341-amino-acid chain: Type II restriction enzyme BgcI specificity subunit S.BcgI (341 aa).

The protein belongs to the type-I restriction system S methylase family. Heterotrimer of two A and one B subunit. Both subunits are necessary for DNA-binding, which is sequence non-specific. The cofactor is Mg(2+).

The enzyme catalyses Endonucleolytic cleavage of DNA to give specific double-stranded fragments with terminal 5'-phosphates.. With respect to regulation, DNA restriction requires S-adenosyl-L-methionine and Mg(2+), and is inhibited by S-adenosyl-homocysteine. SAM may be a cofactor for DNA restriction. In terms of biological role, the specificity subunit. A B, G, H and S subtype restriction enzyme that recognizes the double-stranded sequence 5'-CGAN(6)TGC-3' and cleaves bilaterally and symmetrically 10 base pairs upstream and 12 base pairs downstream of the sequence to release a 34-base pair fragment. Methylation of the recognition sequence occurs on the adenine in either one or both strands; seems to methylate restricted DNA. This subunit degrades DNA in a non-specific manner. The protein is Type II restriction enzyme BgcI specificity subunit S.BcgI of Heyndrickxia coagulans (Weizmannia coagulans).